The primary structure comprises 973 residues: NLR family member X1 (973 aa).

A mitochondrion-targeting transit peptide spans 1-84 (MRWGCHLPRT…EAIQRHRRNL (84 aa)). The segment at 73–554 (ATEAIQRHRR…RILPLLFNLL (482 aa)) is required for interaction with MAVS. An NACHT domain is found at 158 to 481 (QTVVLYGTVG…LRFFLAPCVE (324 aa)). ATP is bound at residue 164–171 (GTVGTGKS). The segment at 554-972 (LKVVPRVFGR…TLLEQLGGSG (419 aa)) is required for the repression of MAVS-induced interferon signaling. In terms of domain architecture, LRRNT spans 665–692 (RQVLPPSELLDHLFFHYEFQNQRFSAEV). LRR repeat units lie at residues 693–716 (LGSLRQLNLAGVRMTPLKCTVVAS), 722–745 (RHPLDEVNLASCQLDPAGLHTLMP), 747–775 (LLRARKLGLQLNNLGPEACRDLRDLLLHD), 776–799 (QCQITTLRLSNNPLTAAGVGVLMD), 809–832 (HLSLLHTDLGDEGLELLAAQLDRN), 833–855 (KQLQELNVAYNGAGDTVALALAK), 856–875 (AARKHPSLELLHLYFNELSS), and 876–897 (EGRQVLRDLGGSGEGGARVVAS). Residues 904–968 (VSEYWSVILS…SEVKTLLEQL (65 aa)) enclose the LRRCT domain.

It belongs to the NLRP family. In terms of assembly, homohexamer. Interacts with MAVS. Interacts with TUFM.

The protein resides in the mitochondrion outer membrane. Functionally, participates in antiviral signaling. Acts as a negative regulator of MAVS-mediated antiviral responses, through the inhibition of the virus-induced RLH (RIG-like helicase)-MAVS interaction. Instead, promotes autophagy by interacting with TUFM and subsequently recruiting the autophagy-related proteins ATG5 and ATG12. Also regulates MAVS-dependent NLRP3 inflammasome activation to attenuate apoptosis. Has no inhibitory function on NF-kappa-B signaling pathway, but enhances NF-kappa-B and JUN N-terminal kinase dependent signaling through the production of reactive oxygen species. Regulates viral mediated-inflammation and energy metabolism in a sex-dependent manner. In females, prevents uncontrolled inflammation and energy metabolism and thus, may contribute to the sex differences observed in infectious and inflammatory diseases. This is NLR family member X1 (Nlrx1) from Rattus norvegicus (Rat).